A 131-amino-acid polypeptide reads, in one-letter code: Large ribosomal subunit protein bL17 (131 aa).

Belongs to the bacterial ribosomal protein bL17 family. As to quaternary structure, part of the 50S ribosomal subunit. Contacts protein L32.

The polypeptide is Large ribosomal subunit protein bL17 (Methylacidiphilum infernorum (isolate V4) (Methylokorus infernorum (strain V4))).